A 256-amino-acid chain; its full sequence is 5-keto-4-deoxy-D-glucarate aldolase (256 aa).

The active-site Proton acceptor is the histidine 50. Glutamine 151 lines the substrate pocket. Glutamate 153 lines the Mg(2+) pocket. Substrate is bound by residues serine 178 and aspartate 179. Mg(2+) is bound at residue aspartate 179.

It belongs to the HpcH/HpaI aldolase family. KDGluc aldolase subfamily. As to quaternary structure, homohexamer; trimer of dimers. Requires Mg(2+) as cofactor.

The enzyme catalyses 5-dehydro-4-deoxy-D-glucarate = 2-hydroxy-3-oxopropanoate + pyruvate. It carries out the reaction 2-dehydro-3-deoxy-D-glucarate = 2-hydroxy-3-oxopropanoate + pyruvate. It participates in carbohydrate acid metabolism; galactarate degradation; D-glycerate from galactarate: step 2/3. Its function is as follows. Catalyzes the reversible retro-aldol cleavage of both 5-keto-4-deoxy-D-glucarate and 2-keto-3-deoxy-D-glucarate to pyruvate and tartronic semialdehyde. This chain is 5-keto-4-deoxy-D-glucarate aldolase, found in Klebsiella pneumoniae subsp. pneumoniae (strain ATCC 700721 / MGH 78578).